The following is a 269-amino-acid chain: 4-hydroxy-tetrahydrodipicolinate reductase (269 aa).

Residues 8–13 (GAAGRM) and Glu-34 each bind NAD(+). Arg-35 serves as a coordination point for NADP(+). Residues 98 to 100 (GTT) and 122 to 125 (APNY) each bind NAD(+). His-155 (proton donor/acceptor) is an active-site residue. A (S)-2,3,4,5-tetrahydrodipicolinate-binding site is contributed by His-156. Lys-159 acts as the Proton donor in catalysis. Residue 165–166 (GT) participates in (S)-2,3,4,5-tetrahydrodipicolinate binding.

The protein belongs to the DapB family.

The protein resides in the cytoplasm. The catalysed reaction is (S)-2,3,4,5-tetrahydrodipicolinate + NAD(+) + H2O = (2S,4S)-4-hydroxy-2,3,4,5-tetrahydrodipicolinate + NADH + H(+). The enzyme catalyses (S)-2,3,4,5-tetrahydrodipicolinate + NADP(+) + H2O = (2S,4S)-4-hydroxy-2,3,4,5-tetrahydrodipicolinate + NADPH + H(+). Its pathway is amino-acid biosynthesis; L-lysine biosynthesis via DAP pathway; (S)-tetrahydrodipicolinate from L-aspartate: step 4/4. In terms of biological role, catalyzes the conversion of 4-hydroxy-tetrahydrodipicolinate (HTPA) to tetrahydrodipicolinate. The chain is 4-hydroxy-tetrahydrodipicolinate reductase from Vibrio cholerae serotype O1 (strain ATCC 39541 / Classical Ogawa 395 / O395).